We begin with the raw amino-acid sequence, 381 residues long: Tetraacyldisaccharide 4'-kinase (381 aa).

78–85 is an ATP binding site; it reads AVGGTGKT.

The protein belongs to the LpxK family.

It catalyses the reaction a lipid A disaccharide + ATP = a lipid IVA + ADP + H(+). Its pathway is glycolipid biosynthesis; lipid IV(A) biosynthesis; lipid IV(A) from (3R)-3-hydroxytetradecanoyl-[acyl-carrier-protein] and UDP-N-acetyl-alpha-D-glucosamine: step 6/6. In terms of biological role, transfers the gamma-phosphate of ATP to the 4'-position of a tetraacyldisaccharide 1-phosphate intermediate (termed DS-1-P) to form tetraacyldisaccharide 1,4'-bis-phosphate (lipid IVA). The sequence is that of Tetraacyldisaccharide 4'-kinase from Syntrophobacter fumaroxidans (strain DSM 10017 / MPOB).